The following is a 91-amino-acid chain: Small ribosomal subunit protein bS16 (91 aa).

Belongs to the bacterial ribosomal protein bS16 family.

The sequence is that of Small ribosomal subunit protein bS16 from Exiguobacterium sp. (strain ATCC BAA-1283 / AT1b).